Consider the following 1037-residue polypeptide: MGVRNCLYGNNMSGQRDIPPEIGEQPEQPPLEAPGAAAPGAGPSPAEEMETEPPHNEPIPVENDGEACGPPEVSRPNFQVLNPAFREAGAHGSYSPPPEEAMPFEAEQPSLGGFWPTLEQPGFPSGVHAGLEAFGPALMEPGAFSGARPGLGGYSPPPEEAMPFEFDQPAQRGCSQLLLQVPDLAPGGPGAAGVPGAPPEEPQALRPAKAGSRGGYSPPPEETMPFELDGEGFGDDSPPPGLSRVIAQVDGSSQFAAVAASSAVRLTPAANAPPLWVPGAIGSPSQEAVRPPSNFTGSSPWMEISGPPFEIGSAPAGVDDTPVNMDSPPIALDGPPIKVSGAPDKRERAERPPVEEEAAEMEGAADAAEGGKVPSPGYGSPAAGAASADTAARAAPAAPADPDSGATPEDPDSGTAPADPDSGAFAADPDSGAAPAAPADPDSGAAPDAPADPDSGAAPDAPADPDAGAAPEAPAAPAAAETRAAHVAPAAPDAGAPTAPAASATRAAQVRRAASAAPASGARRKIHLRPPSPEIQAADPPTPRPTRASAWRGKSESSRGRRVYYDEGVASSDDDSSGDESDDGTSGCLRWFQHRRNRRRRKPQRNLLRNFLVQAFGGCFGRSESPQPKASRSLKVKKVPLAEKRRQMRKEALEKRAQKRAEKKRSKLIDKQLQDEKMGYMCTHRLLLLGAGESGKSTIVKQMRILHVNGFNGEGGEEDPQAARSNSDGEKATKVQDIKNNLKEAIETIVAAMSNLVPPVELANPENQFRVDYILSVMNVPDFDFPPEFYEHAKALWEDEGVRACYERSNEYQLIDCAQYFLDKIDVIKQADYVPSDQDLLRCRVLTSGIFETKFQVDKVNFHMFDVGGQRDERRKWIQCFNDVTAIIFVVASSSYNMVIREDNQTNRLQEALNLFKSIWNNRWLRTISVILFLNKQDLLAEKVLAGKSKIEDYFPEFARYTTPEDATPEPGEDPRVTRAKYFIRDEFLRISTASGDGRHYCYPHFTCAVDTENIRRVFNDCRDIIQRMHLRQYELL.

Disordered regions lie at residues 1 to 105 (MGVR…MPFE), 185 to 224 (APGG…EETM), 283 to 588 (SPSQ…TSGC), and 640 to 666 (PLAE…KKRS). Positions 33-46 (APGAAAPGAGPSPA) are enriched in low complexity. The segment covering 343-354 (PDKRERAERPPV) has biased composition (basic and acidic residues). 2 stretches are compositionally biased toward low complexity: residues 361–408 (MEGA…GATP) and 416–521 (APAD…PASG). The span at 553-565 (GKSESSRGRRVYY) shows a compositional bias: basic and acidic residues. Residues 572-583 (SDDDSSGDESDD) show a composition bias toward acidic residues. Over residues 640–660 (PLAEKRRQMRKEALEKRAQKR) the composition is skewed to basic and acidic residues. Residues 641–667 (LAEKRRQMRKEALEKRAQKRAEKKRSK) are a coiled coil. The G-alpha domain maps to 682–1037 (CTHRLLLLGA…RMHLRQYELL (356 aa)). The interval 685–698 (RLLLLGAGESGKST) is G1 motif. Position 690–698 (690–698 (GAGESGKST)) interacts with GTP. S697 contributes to the Mg(2+) binding site. The tract at residues 711–734 (FNGEGGEEDPQAARSNSDGEKATK) is disordered. A coiled-coil region spans residues 730-756 (EKATKVQDIKNNLKEAIETIVAAMSNL). Residues 839–847 (DLLRCRVLT) are G2 motif. GTP is bound by residues 840 to 847 (LLRCRVLT), 866 to 870 (DVGGQ), and 935 to 938 (NKQD). R844 is subject to ADP-ribosylarginine; by cholera toxin. Mg(2+) is bound at residue T847. Positions 862-871 (FHMFDVGGQR) are G3 motif. Residues 931-938 (ILFLNKQD) are G4 motif. S995 carries the phosphoserine modification. Positions 1007-1012 (TCAVDT) are G5 motif. A1009 lines the GTP pocket.

The protein belongs to the G-alpha family. G(s) subfamily. In terms of assembly, g proteins are composed of 3 units; alpha, beta and gamma. The alpha chain contains the guanine nucleotide binding site. Interacts through its N-terminal region with ALEX which is produced from the same locus in a different open reading frame. This interaction may inhibit its adenylyl cyclase-stimulating activity. Interacts with MAGED2.

Its subcellular location is the cell membrane. The protein resides in the apical cell membrane. It catalyses the reaction GTP + H2O = GDP + phosphate + H(+). Guanine nucleotide-binding proteins (G proteins) function as transducers in numerous signaling pathways controlled by G protein-coupled receptors (GPCRs). The alpha chain contains the guanine nucleotide binding site and alternates between an active, GTP-bound state and an inactive, GDP-bound state. Signaling by an activated GPCR promotes GDP release and GTP binding. The alpha subunit has a low GTPase activity that converts bound GTP to GDP, thereby terminating the signal. Both GDP release and GTP hydrolysis are modulated by numerous regulatory proteins. Signaling involves the activation of adenylyl cyclases, resulting in increased levels of the signaling molecule cAMP. GNAS functions downstream of several GPCRs, including beta-adrenergic receptors. XLas isoforms interact with the same set of receptors as Gnas isoforms. The sequence is that of Guanine nucleotide-binding protein G(s) subunit alpha isoforms XLas (GNAS) from Homo sapiens (Human).